A 417-amino-acid chain; its full sequence is Tyrosine--tRNA ligase (417 aa).

Tyrosine 36 is a binding site for L-tyrosine. Positions 41-50 (PTADSLHIGH) match the 'HIGH' region motif. L-tyrosine-binding residues include tyrosine 170 and glutamine 174. The short motif at 231–235 (KFGKS) is the 'KMSKS' region element. Lysine 234 contributes to the ATP binding site. The 67-residue stretch at 351–417 (TNLVELLIEA…GKKKYFMIIH (67 aa)) folds into the S4 RNA-binding domain.

Belongs to the class-I aminoacyl-tRNA synthetase family. TyrS type 1 subfamily. As to quaternary structure, homodimer.

The protein localises to the cytoplasm. The enzyme catalyses tRNA(Tyr) + L-tyrosine + ATP = L-tyrosyl-tRNA(Tyr) + AMP + diphosphate + H(+). Catalyzes the attachment of tyrosine to tRNA(Tyr) in a two-step reaction: tyrosine is first activated by ATP to form Tyr-AMP and then transferred to the acceptor end of tRNA(Tyr). This Macrococcus caseolyticus (strain JCSC5402) (Macrococcoides caseolyticum) protein is Tyrosine--tRNA ligase.